The chain runs to 81 residues: Large ribosomal subunit protein bL27 (81 aa).

A compositionally biased stretch (polar residues) spans 1–11 (MATSKSGGSSK). The tract at residues 1–21 (MATSKSGGSSKNGRDSISKRL) is disordered.

It belongs to the bacterial ribosomal protein bL27 family.

The protein is Large ribosomal subunit protein bL27 of Borrelia hermsii (strain HS1 / DAH).